The primary structure comprises 357 residues: Membrane-bound lytic murein transglycosylase C (357 aa).

Positions 1–17 (MKLKKFLVLLLIPFLYA) are cleaved as a signal peptide. Cysteine 18 carries the N-palmitoyl cysteine lipid modification. Cysteine 18 is lipidated: S-diacylglycerol cysteine.

The protein belongs to the transglycosylase Slt family.

The protein localises to the cell outer membrane. It carries out the reaction Exolytic cleavage of the (1-&gt;4)-beta-glycosidic linkage between N-acetylmuramic acid (MurNAc) and N-acetylglucosamine (GlcNAc) residues in peptidoglycan, from either the reducing or the non-reducing ends of the peptidoglycan chains, with concomitant formation of a 1,6-anhydrobond in the MurNAc residue.. Murein-degrading enzyme. May play a role in recycling of muropeptides during cell elongation and/or cell division. The polypeptide is Membrane-bound lytic murein transglycosylase C (Mannheimia succiniciproducens (strain KCTC 0769BP / MBEL55E)).